Here is a 317-residue protein sequence, read N- to C-terminus: Malate dehydrogenase (317 aa).

Residues 13 to 18 (GAGNIG) and Asp-38 contribute to the NAD(+) site. Positions 87 and 93 each coordinate substrate. NAD(+) is bound by residues Asn-100 and 123 to 125 (VTN). The substrate site is built by Asn-125 and Arg-156. His-180 (proton acceptor) is an active-site residue.

The protein belongs to the LDH/MDH superfamily. MDH type 3 family.

It carries out the reaction (S)-malate + NAD(+) = oxaloacetate + NADH + H(+). Functionally, catalyzes the reversible oxidation of malate to oxaloacetate. The sequence is that of Malate dehydrogenase from Anaplasma marginale (strain Florida).